A 237-amino-acid polypeptide reads, in one-letter code: LexA repressor (237 aa).

A DNA-binding region (H-T-H motif) is located at residues 26–46; sequence FDEMKEALDLRSKSGIHRLIT. A disordered region spans residues 84–110; sequence GFSPSVIEGGAQPKPSSRDLAPARSSG. Active-site for autocatalytic cleavage activity residues include Ser-158 and Lys-196.

The protein belongs to the peptidase S24 family. As to quaternary structure, homodimer.

It catalyses the reaction Hydrolysis of Ala-|-Gly bond in repressor LexA.. Functionally, represses a number of genes involved in the response to DNA damage (SOS response), including recA and lexA. In the presence of single-stranded DNA, RecA interacts with LexA causing an autocatalytic cleavage which disrupts the DNA-binding part of LexA, leading to derepression of the SOS regulon and eventually DNA repair. This Parvibaculum lavamentivorans (strain DS-1 / DSM 13023 / NCIMB 13966) protein is LexA repressor.